A 232-amino-acid chain; its full sequence is dTTP/UTP pyrophosphatase (232 aa).

The active-site Proton acceptor is the Asp103.

This sequence belongs to the Maf family. YhdE subfamily. It depends on a divalent metal cation as a cofactor.

The protein localises to the cytoplasm. It carries out the reaction dTTP + H2O = dTMP + diphosphate + H(+). The catalysed reaction is UTP + H2O = UMP + diphosphate + H(+). Its function is as follows. Nucleoside triphosphate pyrophosphatase that hydrolyzes dTTP and UTP. May have a dual role in cell division arrest and in preventing the incorporation of modified nucleotides into cellular nucleic acids. This Bartonella henselae (strain ATCC 49882 / DSM 28221 / CCUG 30454 / Houston 1) (Rochalimaea henselae) protein is dTTP/UTP pyrophosphatase.